The primary structure comprises 237 residues: Ribose-5-phosphate isomerase A (237 aa).

Residues 30–33 (SGST), 87–90 (DGAD), and 100–103 (KGGG) each bind substrate. Glu-109 serves as the catalytic Proton acceptor. Lys-127 is a binding site for substrate.

The protein belongs to the ribose 5-phosphate isomerase family. As to quaternary structure, homodimer.

The catalysed reaction is aldehydo-D-ribose 5-phosphate = D-ribulose 5-phosphate. It functions in the pathway carbohydrate degradation; pentose phosphate pathway; D-ribose 5-phosphate from D-ribulose 5-phosphate (non-oxidative stage): step 1/1. Functionally, catalyzes the reversible conversion of ribose-5-phosphate to ribulose 5-phosphate. The polypeptide is Ribose-5-phosphate isomerase A (Prochlorococcus marinus (strain MIT 9211)).